A 170-amino-acid chain; its full sequence is Cathelicidin antimicrobial peptide (170 aa).

A signal peptide spans 1–30 (MKTQRDGHSLGWWSLVLLLLGLVMPLAIIA). Residues 31-131 (QVLSYKEAVL…DISCDKDNKR (101 aa)) constitute a propeptide, cathelin-like domain (CLD). Intrachain disulfides connect Cys86–Cys97 and Cys108–Cys125. The tract at residues 150–162 (SKRIVQRIKDFLR) is active core.

Belongs to the cathelicidin family. Monomer, homodimer or homotrimer (in vitro). Oligomerizes as tetra- or hexamer in solution (in vitro). Proteolytically cleaved by proteinase PRTN3 into antibacterial peptide LL-37. Proteolytically cleaved by cathepsin CTSG and neutrophil elastase ELANE. In terms of processing, resistant to proteolytic degradation in solution, and when bound to both zwitterionic (mimicking mammalian membranes) and negatively charged membranes (mimicking bacterial membranes). Post-translationally, after secretion onto the skin surface, the CAMP gene product is processed by a serine protease-dependent mechanism into multiple novel antimicrobial peptides distinct from and shorter than cathelicidin LL-37. These peptides show enhanced antimicrobial action, acquiring the ability to kill skin pathogens such as S.aureus, E.coli and C.albicans. These peptides have lost the ability to stimulate CXCL8/IL8 release from keratinocytes. The peptides act synergistically, killing bacteria at lower concentrations when present together, and maintain activity at increased salt condition.

It is found in the secreted. It localises to the vesicle. Antimicrobial protein that is an integral component of the innate immune system. Binds to bacterial lipopolysaccharides (LPS). Acts via neutrophil N-formyl peptide receptors to enhance the release of CXCL2. Postsecretory processing generates multiple cathelicidin antimicrobial peptides with various lengths which act as a topical antimicrobial defense in sweat on skin. The unprocessed precursor form, cathelicidin antimicrobial peptide, inhibits the growth of Gram-negative E.coli and E.aerogenes with efficiencies comparable to that of the mature peptide LL-37 (in vitro). In terms of biological role, antimicrobial peptide that is an integral component of the innate immune system. Binds to bacterial lipopolysaccharides (LPS). Causes membrane permeabilization by forming transmembrane pores (in vitro). Causes lysis of E.coli. Exhibits antimicrobial activity against Gram-negative bacteria such as P.aeruginosa, S.typhimurium, E.aerogenes, E.coli and P.syringae, Gram-positive bacteria such as L.monocytogenes, S.epidermidis, S.pyogenes and S.aureus, as well as vancomycin-resistant enterococci (in vitro). Exhibits antimicrobial activity against methicillin-resistant S.aureus, P.mirabilis, and C.albicans in low-salt media, but not in media containing 100 mM NaCl (in vitro). Forms chiral supramolecular assemblies with quinolone signal (PQS) molecules of P.aeruginosa, which may lead to interference of bacterial quorum signaling and perturbance of bacterial biofilm formation. May form supramolecular fiber-like assemblies on bacterial membranes. Induces cytokine and chemokine producation as well as TNF/TNFA and CSF2/GMCSF production in normal human keratinocytes. Exhibits hemolytic activity against red blood cells. Functionally, exhibits antimicrobial activity against E.coli and B.megaterium (in vitro). The sequence is that of Cathelicidin antimicrobial peptide from Gorilla gorilla gorilla (Western lowland gorilla).